Reading from the N-terminus, the 843-residue chain is Eisosome protein 1 (843 aa).

Ser2 is subject to N-acetylserine. Ser2 carries the phosphoserine modification. The tract at residues 13–44 (HNIGKTSGGGSRTSSITSSKKSLKHGSKSLRK) is disordered. Positions 33-44 (KSLKHGSKSLRK) are enriched in basic residues. Phosphoserine occurs at positions 88 and 130. Residues 120–174 (KMGPKVVRNNSITSATSKTSKESQTKRKSKESPGAAASKAYSMTMETTSLSSQTN) form a disordered region. Polar residues-rich tracts occupy residues 127-137 (RNNSITSATSK) and 163-174 (TMETTSLSSQTN). Phosphoserine is present on residues Ser182, Ser401, Ser584, and Ser710. Positions 717 to 843 (DLPTQLEKIE…QDAISNQEKK (127 aa)) are disordered. Residue Thr720 is modified to Phosphothreonine. The segment covering 752-764 (STAAKEATETSSA) has biased composition (low complexity). Residues Ser763 and Ser775 each carry the phosphoserine modification. A compositionally biased stretch (basic and acidic residues) spans 781–797 (SGKEDANDCKSAEHSKE). The span at 798–810 (ISVSQKAGNNKSL) shows a compositional bias: polar residues. Ser816, Ser828, Ser829, and Ser838 each carry phosphoserine.

Belongs to the EIS1 family.

The protein resides in the cytoplasmic granule. Its subcellular location is the cell membrane. Its function is as follows. Required for normal formation of eisosomes, large cytoplasmic protein assemblies that localize to specialized domains on plasma membrane and mark the site of endocytosis. This Saccharomyces cerevisiae (strain Lalvin EC1118 / Prise de mousse) (Baker's yeast) protein is Eisosome protein 1 (EIS1).